Reading from the N-terminus, the 495-residue chain is Loline biosynthesis cluster 1 transcription factor lolU1 (495 aa).

It is found in the nucleus. Transcriptional regulator that may regulate the expression of the loline biosynthesis cluster 1, one of the 2 clusters involved in the biosynthesis of loline alkaloids, potent insecticidal agents composed of a pyrrolizidine ring system and an uncommon ether bridge linking carbons 2 and 7. In Epichloe uncinata (Endophyte fungus), this protein is Loline biosynthesis cluster 1 transcription factor lolU1.